The chain runs to 63 residues: Cecropin-B (63 aa).

Residues 1-22 (MNFNKIFVFVALILAISLGNTE) form the signal peptide. Arginine amide is present on Arg-62.

The protein belongs to the cecropin family.

It localises to the secreted. Its function is as follows. Cecropins have lytic and antibacterial activity against several Gram-positive and Gram-negative bacteria. This chain is Cecropin-B (CecB), found in Drosophila simulans (Fruit fly).